The sequence spans 904 residues: Polycystin-2 (904 aa).

Positions 1 to 102 (MSSSRVRPQA…SSSGGVPGNF (102 aa)) are disordered. Residues 1–155 (MSSSRVRPQA…NSNREMYLKT (155 aa)) are Cytoplasmic-facing. Over residues 8 to 20 (PQAPQSPAASASA) the composition is skewed to low complexity. Residues 26–38 (EGIEMEKMHHEEV) show a composition bias toward basic and acidic residues. A compositionally biased stretch (low complexity) spans 86 to 96 (SVSTTSSSSSG). The chain crosses the membrane as a helical span at residues 156-177 (VLREMITYILFLLTLCIITYGM). Over 178 to 404 (VSTNMYYYTK…TVRLLRYVSS (227 aa)) the chain is Extracellular. 3 N-linked (GlcNAc...) asparagine glycosylation sites follow: Asn235, Asn241, and Asn264. A disulfide bond links Cys267 and Cys280. A glycan (N-linked (GlcNAc...) asparagine) is linked at Asn298. A helical transmembrane segment spans residues 405–425 (WDYFVGMCEVSFCLFVLYYLV). Residues 426 to 441 (EEALEIRLHRLRYFKS) are Cytoplasmic-facing. The chain crosses the membrane as a helical span at residues 442 to 462 (LWNCLDVLIVALSVPAIIMNI). At 463–489 (CRTSAVSHRLHFLLENHSTYPNFEPLA) the chain is on the extracellular side. Asn478 is a glycosylation site (N-linked (GlcNAc...) asparagine). The helical transmembrane segment at 490–510 (RLQVHFNNLAAIIVFLSWVKL) threads the bilayer. The Cytoplasmic segment spans residues 511-534 (FKFINFNKTMNQLSTTMSRCAKDL). Residues 535–556 (MGFAIMFFIVFLAYAQLAYLVF) traverse the membrane as a helical segment. Residues 557–568 (GTQVNDFSTFQA) are Extracellular-facing. Residues 569–583 (CIFTQFRIILGDFDF) constitute an intramembrane region (pore-forming). Ca(2+) is bound at residue Leu578. The Selectivity filter signature appears at 578 to 580 (LGD). The Extracellular portion of the chain corresponds to 584–591 (SEIEEADS). Residues 592–612 (VLGPIYFTTFVFFIFMILLNM) traverse the membrane as a helical segment. At 613–904 (FLAIINDTYS…DAAASGPAHL (292 aa)) the chain is on the cytoplasmic side. One can recognise an EF-hand 1 domain in the interval 687-722 (HSDAEIEAIFAKYDLDGDQELTEHEHQQMRDDLEKE). Ca(2+) is bound by residues Asp700, Asp702, Asp704, Glu706, and Glu711. The span at 708–732 (TEHEHQQMRDDLEKEREDLDLEHSS) shows a compositional bias: basic and acidic residues. Disordered stretches follow at residues 708 to 770 (TEHE…SSGG) and 854 to 904 (ESDD…PAHL). The linker stretch occupies residues 740–759 (RSFSRSQDDSEEDDDEDSGH). In terms of domain architecture, EF-hand 2 spans 768 to 786 (SGGVSYEEFQVLVRRVDRM). The stretch at 770-809 (GVSYEEFQVLVRRVDRMEHSIGSIVSKIDAVIVKLEAMER) forms a coiled coil. Over residues 878-890 (LRPRSSRPPSSLS) the composition is skewed to low complexity.

The protein belongs to the polycystin family. Homotetramer. Component of the heterotetrameric polycystin channel complex with pkd1; the tetramer contains one pkd1 chain and three pkd2 chains. Interacts with pkd1l1. Phosphorylated. Phosphorylation is important for protein function; a mutant human construct that lacks the N-terminal phosphorylation sites cannot complement a zebrafish pkd2-deficient mutant. Post-translationally, N-glycosylated. The four subunits in a tetramer probably differ in the extent of glycosylation; simultaneous glycosylation of all experimentally validated sites would probably create steric hindrance. In terms of processing, sumoylated by SUMO1; sumoylation regulates PKD2 membrane recycling. As to expression, detected along cilia and at the cilium basal body in Kupffer's vesicle at the 10 somite stage. Detected in heart at 48hpf. Detected in muscle and pronephric kidney at 48 hpf. Detected on trunk muscle sarcolemma and sarcomere, on ependymal cell cilia in brain, at the apical cell membrane in epithelial cells in the ear, at the lateral line organ and olfactory placode at 56 hpf. Detected in adult kidney (at protein level).

The protein resides in the basolateral cell membrane. The protein localises to the cell membrane. It is found in the sarcolemma. It localises to the cytoplasm. Its subcellular location is the myofibril. The protein resides in the sarcomere. The protein localises to the sarcoplasmic reticulum membrane. It is found in the apical cell membrane. It localises to the endoplasmic reticulum membrane. Its subcellular location is the cell projection. The protein resides in the cilium. The protein localises to the cytoskeleton. It is found in the cilium basal body. It localises to the cytoplasmic vesicle membrane. It catalyses the reaction K(+)(in) = K(+)(out). It carries out the reaction Na(+)(in) = Na(+)(out). The catalysed reaction is Ca(2+)(in) = Ca(2+)(out). Its activity is regulated as follows. Channel activity is regulated by phosphorylation. Channel activity is regulated by intracellular Ca(2+). In terms of biological role, forms a nonselective cation channel. Can function as a homotetrameric ion channel or can form heteromer with PKD1. Displays distinct function depending on its subcellular localization and regulation by its binding partners. In the primary cilium functions as a cation channel, with a preference for monovalent cations over divalent cations that allows K(+), Na(+) and Ca(2+) influx, with low selectivity for Ca(2+). In the endoplasmic reticulum, likely functions as a K(+) channel to facilitate Ca(2+) release. Required for normal oscillation of Ca(2+) levels within cilia; these oscillations of the intraciliary Ca(2+) levels can trigger cytoplasmic Ca(2+) signaling cascades. Required for normal temporal variation of the intracellular Ca(2+) levels in the heart. Plays a role in fluid-flow mechanosensation. Required for normal specification of the body left-right axis during embryogenesis, most likely via its role in ciliary Ca(2+) oscillations in Kupffer's vesicle. In Danio rerio (Zebrafish), this protein is Polycystin-2.